Here is a 412-residue protein sequence, read N- to C-terminus: Adenosine receptor A2a (412 aa).

The Extracellular portion of the chain corresponds to 1 to 7 (MPTVGSL). A helical membrane pass occupies residues 8 to 32 (VYIMVELAIALLAILGNMLVCWAVW). Residues 33 to 42 (LNSNLQNVTN) lie on the Cytoplasmic side of the membrane. A helical membrane pass occupies residues 43 to 66 (YFVVSLAAADIAVGVLAIPFAITI). Over 67-77 (STGFCAACHGC) the chain is Extracellular. 3 cysteine pairs are disulfide-bonded: cysteine 71/cysteine 159, cysteine 74/cysteine 146, and cysteine 77/cysteine 166. A helical transmembrane segment spans residues 78–100 (LFIACFVLVLTQSSIFSLLAIAI). The Cytoplasmic segment spans residues 101–120 (DRYIAIRIPLRYNGLVTGTR). Residues 121-143 (AKGVIAVCWVLSFAIGLTPMLGW) traverse the membrane as a helical segment. Topologically, residues 144-173 (NNCHHWGEGENQSQGCGEGQVACLFEDVVP) are extracellular. N-linked (GlcNAc...) asparagine glycosylation is present at asparagine 154. Glutamate 169 provides a ligand contact to adenosine. Residues 174-198 (MNYMVYYNFFACVLVPLLLMLGVYL) traverse the membrane as a helical segment. Residues 199 to 234 (RIFLAARRQLKQMETQPLPGERARSTLQKEVHAAKS) lie on the Cytoplasmic side of the membrane. Residues 235 to 258 (LAIIVGLFALCWLPLHIINCFTFF) traverse the membrane as a helical segment. Asparagine 253 is a binding site for adenosine. Cysteine 259 and cysteine 262 are joined by a disulfide. Over 259-266 (CPECPHAP) the chain is Extracellular. A helical membrane pass occupies residues 267 to 290 (LWLMYPAIILSHFNSVVNPFIYAY). Adenosine is bound by residues serine 277 and histidine 278. Residues 291-412 (RIREFRHTFH…PLAQDGAGVS (122 aa)) lie on the Cytoplasmic side of the membrane. A disordered region spans residues 368-412 (RASARESPGDTGLPDVELLSHELHGASPESPGLEGPLAQDGAGVS).

This sequence belongs to the G-protein coupled receptor 1 family. Interacts (via cytoplasmic C-terminal domain) with USP4; the interaction is direct. May interact with DRD4. Interacts with NECAB2. Interacts (via cytoplasmic C-terminal domain) with GAS2L2; interaction enhances receptor-mediated adenylyl cyclase activity. In terms of processing, ubiquitinated. Deubiquitinated by USP4; leading to stabilization and expression at the cell surface.

It localises to the cell membrane. Receptor for adenosine. The activity of this receptor is mediated by G proteins which activate adenylyl cyclase. The sequence is that of Adenosine receptor A2a (ADORA2A) from Equus caballus (Horse).